A 201-amino-acid chain; its full sequence is Receptor expression-enhancing protein 6 (201 aa).

The next 3 membrane-spanning stretches (helical) occupy residues 36–56 (LAAGALALLGLYLLFGYGASL), 89–109 (WVVYALFGLVEFFSDLLLFWF), and 117–137 (CAFLLFCMTPGPWNGALLLYH).

It belongs to the DP1 family. In terms of assembly, interacts with STX3. Interacts with clathrin. As to expression, expressed in the inner segment of rod photoreceptors and outer plexiform layer of the retina (at protein level). Expressed in liver, but not detected in brain, muscle, kidney, retinal cone photoreceptors or retinal ganglion cells (at protein level). Highly expressed in the ganglion cell layer of the retina and in liver, and also detected at low levels in kidney and testis. Isoform 1: Expressed in the retina. Isoform 2: Expressed in liver.

It localises to the endoplasmic reticulum membrane. Its subcellular location is the cytoplasmic vesicle. The protein resides in the clathrin-coated vesicle membrane. In terms of biological role, required for correct function and survival of retinal photoreceptors. Required for retinal development. In rod photoreceptors, facilitates stability and/or trafficking of guanylate cyclases and is required to maintain endoplasmic reticulum and mitochondrial homeostasis. May play a role in clathrin-coated intracellular vesicle trafficking of proteins from the endoplasmic reticulum to the retinal rod plasma membrane. The polypeptide is Receptor expression-enhancing protein 6 (Reep6) (Mus musculus (Mouse)).